Consider the following 151-residue polypeptide: Large ribosomal subunit protein uL15 (151 aa).

A disordered region spans residues 1-51 (MKSLRLEDAVPQSGSRHRKLRVGRGHSAGQGKTSGRGMRGQKCRSGGGVRP). Positions 15–24 (SRHRKLRVGR) are enriched in basic residues. Positions 26–38 (HSAGQGKTSGRGM) are enriched in gly residues.

This sequence belongs to the universal ribosomal protein uL15 family. As to quaternary structure, part of the 50S ribosomal subunit.

Binds to the 23S rRNA. The protein is Large ribosomal subunit protein uL15 of Gloeobacter violaceus (strain ATCC 29082 / PCC 7421).